The following is a 219-amino-acid chain: Salivary IL-4-inducing protein (219 aa).

Positions 1 to 19 (MKYLLTLLMALSLVNLMLT) are cleaved as a signal peptide. Residues 19 to 109 (TRPTPEDDGG…KNDPRETYNK (91 aa)) form a disordered region. Residues 30 to 43 (SEEPQTQETTGETT) are compositionally biased toward low complexity. Over residues 72–107 (DDTAKKEDDGESKDGEGSEKSDKEKGEPKNDPRETY) the composition is skewed to basic and acidic residues.

Salivary gland (at protein level).

Its subcellular location is the secreted. Functionally, induces expression of IL4 in host skin by diverting host CD4 cells away from Th1 and towards Th2 responsiveness. Induces expression of IL10 in host skin. Down-regulates expression of IL12B, IFN-gamma (IFNG) and TNF-alpha (TNF) in host skin. This is Salivary IL-4-inducing protein from Aedes aegypti (Yellowfever mosquito).